Consider the following 175-residue polypeptide: Adenine phosphoribosyltransferase (175 aa).

This sequence belongs to the purine/pyrimidine phosphoribosyltransferase family. As to quaternary structure, homodimer.

Its subcellular location is the cytoplasm. The enzyme catalyses AMP + diphosphate = 5-phospho-alpha-D-ribose 1-diphosphate + adenine. It functions in the pathway purine metabolism; AMP biosynthesis via salvage pathway; AMP from adenine: step 1/1. Functionally, catalyzes a salvage reaction resulting in the formation of AMP, that is energically less costly than de novo synthesis. The protein is Adenine phosphoribosyltransferase of Lactobacillus gasseri (strain ATCC 33323 / DSM 20243 / BCRC 14619 / CIP 102991 / JCM 1131 / KCTC 3163 / NCIMB 11718 / NCTC 13722 / AM63).